A 610-amino-acid polypeptide reads, in one-letter code: UvrABC system protein C (610 aa).

One can recognise a GIY-YIG domain in the interval 16–94 (SQPGVYRMYD…IKLYQPRYNV (79 aa)). In terms of domain architecture, UVR spans 204-239 (DQVLTQLISRMETASQNLEFEEAARIRDQIQAVRRV).

Belongs to the UvrC family. Interacts with UvrB in an incision complex.

Its subcellular location is the cytoplasm. Functionally, the UvrABC repair system catalyzes the recognition and processing of DNA lesions. UvrC both incises the 5' and 3' sides of the lesion. The N-terminal half is responsible for the 3' incision and the C-terminal half is responsible for the 5' incision. This chain is UvrABC system protein C, found in Escherichia coli O45:K1 (strain S88 / ExPEC).